Here is a 209-residue protein sequence, read N- to C-terminus: Uracil phosphoribosyltransferase (209 aa).

5-phospho-alpha-D-ribose 1-diphosphate contacts are provided by residues R79, R104, and 131–139 (DPMLATGGS). Uracil contacts are provided by residues I194 and 199 to 201 (GDA). D200 is a 5-phospho-alpha-D-ribose 1-diphosphate binding site.

This sequence belongs to the UPRTase family. The cofactor is Mg(2+).

The enzyme catalyses UMP + diphosphate = 5-phospho-alpha-D-ribose 1-diphosphate + uracil. The protein operates within pyrimidine metabolism; UMP biosynthesis via salvage pathway; UMP from uracil: step 1/1. Allosterically activated by GTP. Functionally, catalyzes the conversion of uracil and 5-phospho-alpha-D-ribose 1-diphosphate (PRPP) to UMP and diphosphate. This Streptococcus agalactiae serotype III (strain NEM316) protein is Uracil phosphoribosyltransferase.